The chain runs to 263 residues: S-acyl fatty acid synthase thioesterase, medium chain (263 aa).

Position 1 is an N-acetylmethionine (M1). Active-site residues include S101 and H237. Residues 262–263 (LT) form an important for interaction with FASN region.

The protein belongs to the thioesterase family. In terms of assembly, interacts (via C-terminus) with FASN.

It localises to the cytoplasm. Its subcellular location is the cytosol. It carries out the reaction (9Z)-octadecenoyl-[ACP] + H2O = (9Z)-octadecenoate + holo-[ACP] + H(+). The enzyme catalyses decanoyl-CoA + H2O = decanoate + CoA + H(+). It catalyses the reaction dodecanoyl-CoA + H2O = dodecanoate + CoA + H(+). The catalysed reaction is tetradecanoyl-CoA + H2O = tetradecanoate + CoA + H(+). It carries out the reaction hexadecanoyl-CoA + H2O = hexadecanoate + CoA + H(+). Functionally, contributes to the release of free fatty acids from fatty acid synthase (FASN). Has broad substrate specificity, giving rise to a range of free fatty acids with chain lengths between 10 and 16 carbon atoms (C10 - C16). The polypeptide is S-acyl fatty acid synthase thioesterase, medium chain (Rattus norvegicus (Rat)).